A 572-amino-acid polypeptide reads, in one-letter code: MKASQFLFATLKETPSDADIASSQLMVRAGLIRKIASGLYIWLPMGLRVLQKVERIVREEMQNIGAQEVLMPMTQPAELWQMTGRFNDYGPELLRFKDRHDRDFVLGPTHEEVITNLAQGELRSYKQLPITFFQIQNKFRDEIRPRFGVMRAREFTMKDAYSFHVDQASLAKTYDDMYDAYTRIFTRLGLDFRAVQADTGSIGGFASHEFHVLADSGEDDIAFSDSSEYAANVELAESVCTAERQPATMARENVDTVNMPTCEAVAEYLNVELATTVKTLIVQGHTPEGEPQLIAVVLRGDHTLNTIKAEKIEEANVPLTMATEEELKAAGLHKGYIGVELDMPVFVDRAAAALSDFVSGANEVNKHTIGMNWERDANITRIVDIRNVNQGDPSPDGKGTLQIKRGIEVGHIFQLGNKYSQAMNCTVSGDDGKPVTLMMGCYGIGVSRIIAAAIEQNNDENGIMWPLTPNISDSLAPFEVAIVPMKSKEETVMQTATALYDELKALGVNVLLDDRNERPGVKFADLELIGIPHRIVVSDRNLAEDKYEYINRRDTEKQLLSRDEVLAKVSSK.

It belongs to the class-II aminoacyl-tRNA synthetase family. ProS type 1 subfamily. As to quaternary structure, homodimer.

It is found in the cytoplasm. It catalyses the reaction tRNA(Pro) + L-proline + ATP = L-prolyl-tRNA(Pro) + AMP + diphosphate. Catalyzes the attachment of proline to tRNA(Pro) in a two-step reaction: proline is first activated by ATP to form Pro-AMP and then transferred to the acceptor end of tRNA(Pro). As ProRS can inadvertently accommodate and process non-cognate amino acids such as alanine and cysteine, to avoid such errors it has two additional distinct editing activities against alanine. One activity is designated as 'pretransfer' editing and involves the tRNA(Pro)-independent hydrolysis of activated Ala-AMP. The other activity is designated 'posttransfer' editing and involves deacylation of mischarged Ala-tRNA(Pro). The misacylated Cys-tRNA(Pro) is not edited by ProRS. The sequence is that of Proline--tRNA ligase from Psychrobacter arcticus (strain DSM 17307 / VKM B-2377 / 273-4).